The chain runs to 340 residues: Phenylalanine--tRNA ligase alpha subunit (340 aa).

Glutamate 254 lines the Mg(2+) pocket.

This sequence belongs to the class-II aminoacyl-tRNA synthetase family. Phe-tRNA synthetase alpha subunit type 1 subfamily. As to quaternary structure, tetramer of two alpha and two beta subunits. Mg(2+) is required as a cofactor.

The protein localises to the cytoplasm. It catalyses the reaction tRNA(Phe) + L-phenylalanine + ATP = L-phenylalanyl-tRNA(Phe) + AMP + diphosphate + H(+). The polypeptide is Phenylalanine--tRNA ligase alpha subunit (Caldicellulosiruptor saccharolyticus (strain ATCC 43494 / DSM 8903 / Tp8T 6331)).